The following is a 126-amino-acid chain: MNFPQNVKYTNEHEWIRLEGDVAYVGITDYAQEQLGDIVFVDIPTEGETLEAGEVFGTIEVVKTISDLFLPVAGEVVEQNPALEENPELVNKDPYGEGWLIKMKPANAADLDNLLDAEGYKAVVNA.

A Lipoyl-binding domain is found at 22–104 (VAYVGITDYA…YGEGWLIKMK (83 aa)). Position 63 is an N6-lipoyllysine (Lys-63).

Belongs to the GcvH family. As to quaternary structure, the glycine cleavage system is composed of four proteins: P, T, L and H. The cofactor is (R)-lipoate.

Its function is as follows. The glycine cleavage system catalyzes the degradation of glycine. The H protein shuttles the methylamine group of glycine from the P protein to the T protein. In Bacteroides fragilis (strain ATCC 25285 / DSM 2151 / CCUG 4856 / JCM 11019 / LMG 10263 / NCTC 9343 / Onslow / VPI 2553 / EN-2), this protein is Glycine cleavage system H protein.